Here is a 145-residue protein sequence, read N- to C-terminus: 3-hydroxyacyl-[acyl-carrier-protein] dehydratase FabZ (145 aa).

His-48 is a catalytic residue.

The protein belongs to the thioester dehydratase family. FabZ subfamily.

The protein resides in the cytoplasm. It carries out the reaction a (3R)-hydroxyacyl-[ACP] = a (2E)-enoyl-[ACP] + H2O. Functionally, involved in unsaturated fatty acids biosynthesis. Catalyzes the dehydration of short chain beta-hydroxyacyl-ACPs and long chain saturated and unsaturated beta-hydroxyacyl-ACPs. In Saccharophagus degradans (strain 2-40 / ATCC 43961 / DSM 17024), this protein is 3-hydroxyacyl-[acyl-carrier-protein] dehydratase FabZ.